The chain runs to 248 residues: NADP-dependent 3-hydroxy acid dehydrogenase YdfG (248 aa).

Residues 7-12, 32-33, 54-55, and Asn81 each bind NADP(+); these read GATAGF, RR, and DV. Ser134 is a substrate binding site. NADP(+)-binding positions include Tyr147, Lys151, and 177-185; that span reads PGLVGGTEF. Tyr147 (proton acceptor) is an active-site residue.

It belongs to the short-chain dehydrogenases/reductases (SDR) family. In terms of assembly, homotetramer.

It catalyses the reaction 3-hydroxypropanoate + NADP(+) = 3-oxopropanoate + NADPH + H(+). The enzyme catalyses L-allo-threonine + NADP(+) = aminoacetone + CO2 + NADPH. Its function is as follows. NADP-dependent dehydrogenase with broad substrate specificity acting on 3-hydroxy acids. Catalyzes the NADP-dependent oxidation of L-allo-threonine to L-2-amino-3-keto-butyrate, which is spontaneously decarboxylated into aminoacetone. Also acts on D-threonine, L-serine, D-serine, D-3-hydroxyisobutyrate, L-3-hydroxyisobutyrate, D-glycerate and L-glycerate. Able to catalyze the reduction of the malonic semialdehyde to 3-hydroxypropionic acid. YdfG is apparently supplementing RutE, the presumed malonic semialdehyde reductase involved in pyrimidine degradation since both are able to detoxify malonic semialdehyde. The protein is NADP-dependent 3-hydroxy acid dehydrogenase YdfG of Escherichia coli (strain K12).